The following is a 282-amino-acid chain: Small-conductance mechanosensitive channel (282 aa).

At 1 to 23 the chain is on the periplasmic side; it reads MWADIYHKLVEIYDIKAVKFLLD. A helical membrane pass occupies residues 24-46; sequence VLKILIIAFIGIKFADFLIYRFY. The Cytoplasmic segment spans residues 47-66; the sequence is KLYSKSKIQLPQRKIDTLTS. A helical transmembrane segment spans residues 67–87; that stretch reads LTKNAVRYIIYFLAGASILKL. The Periplasmic portion of the chain corresponds to 88–89; it reads FN. The helical transmembrane segment at 90-110 threads the bilayer; the sequence is IDMTSLLAVAGIGSLAIGFGA. Residues 111-282 are Cytoplasmic-facing; the sequence is QNLVKDMISG…TVILSEKKTN (172 aa).

The protein belongs to the MscS (TC 1.A.23) family. As to quaternary structure, homoheptamer.

The protein localises to the cell inner membrane. Functionally, mechanosensitive ion channel that participates in the regulation of osmotic pressure changes within the cell, opening in response to stretch forces in the membrane lipid bilayer, without the need for other proteins. Has high selectivity for anions, and may contribute to resistance to hypoosmotic shock. This is Small-conductance mechanosensitive channel from Caldanaerobacter subterraneus subsp. tengcongensis (strain DSM 15242 / JCM 11007 / NBRC 100824 / MB4) (Thermoanaerobacter tengcongensis).